The primary structure comprises 349 residues: Peroxidase 23 (349 aa).

A signal peptide spans 1–29 (MGFSSSLSCSAMGALIVGCLLLQASNSNA). At glutamine 30 the chain carries Pyrrolidone carboxylic acid. 4 cysteine pairs are disulfide-bonded: cysteine 40/cysteine 120, cysteine 73/cysteine 78, cysteine 126/cysteine 329, and cysteine 206/cysteine 238. Histidine 71 serves as the catalytic Proton acceptor. 5 residues coordinate Ca(2+): aspartate 72, valine 75, glycine 77, aspartate 79, and serine 81. A glycan (N-linked (GlcNAc...) asparagine) is linked at asparagine 86. Proline 168 is a substrate binding site. Histidine 199 provides a ligand contact to heme b. A Ca(2+)-binding site is contributed by threonine 200. Residues asparagine 217 and asparagine 243 are each glycosylated (N-linked (GlcNAc...) asparagine). Positions 251, 254, and 259 each coordinate Ca(2+).

Belongs to the peroxidase family. Classical plant (class III) peroxidase subfamily. Heme b serves as cofactor. Ca(2+) is required as a cofactor.

The protein localises to the secreted. The protein resides in the vacuole. The catalysed reaction is 2 a phenolic donor + H2O2 = 2 a phenolic radical donor + 2 H2O. Its function is as follows. Removal of H(2)O(2), oxidation of toxic reductants, biosynthesis and degradation of lignin, suberization, auxin catabolism, response to environmental stresses such as wounding, pathogen attack and oxidative stress. These functions might be dependent on each isozyme/isoform in each plant tissue. This chain is Peroxidase 23 (PER23), found in Arabidopsis thaliana (Mouse-ear cress).